The chain runs to 227 residues: Lipoprotein-releasing system ATP-binding protein LolD (227 aa).

Positions 6 to 227 (LTSQKLYKSY…LHEGSLYARE (222 aa)) constitute an ABC transporter domain. 42–49 (GPSGSGKS) contacts ATP.

This sequence belongs to the ABC transporter superfamily. Lipoprotein translocase (TC 3.A.1.125) family. As to quaternary structure, the complex is composed of two ATP-binding proteins (LolD) and two transmembrane proteins (LolC and LolE).

Its subcellular location is the cell inner membrane. In terms of biological role, part of the ABC transporter complex LolCDE involved in the translocation of mature outer membrane-directed lipoproteins, from the inner membrane to the periplasmic chaperone, LolA. Responsible for the formation of the LolA-lipoprotein complex in an ATP-dependent manner. In Legionella pneumophila (strain Lens), this protein is Lipoprotein-releasing system ATP-binding protein LolD.